The sequence spans 267 residues: L-erythrulose-1-phosphate isomerase (267 aa).

His-95 functions as the Electrophile in the catalytic mechanism. Glu-168 acts as the Proton acceptor in catalysis. 2 residues coordinate substrate: Gly-174 and Ser-211.

This sequence belongs to the triosephosphate isomerase family. In terms of assembly, homodimer.

It is found in the cytoplasm. The catalysed reaction is L-erythrulose 1-phosphate = D-erythrulose 4-phosphate. The protein operates within carbohydrate metabolism; erythritol degradation. Its function is as follows. Catalyzes the isomerization of D-erythrulose-4P to L-erythrulose-1P. The sequence is that of L-erythrulose-1-phosphate isomerase from Rhizobium etli (strain ATCC 51251 / DSM 11541 / JCM 21823 / NBRC 15573 / CFN 42).